Here is a 627-residue protein sequence, read N- to C-terminus: Phosphomethylpyrimidine synthase (627 aa).

Over residues Met1–Pro24 the composition is skewed to polar residues. A disordered region spans residues Met1–Val29. Substrate-binding positions include Asn231, Met260, Tyr289, His325, Ser345–Gly347, Asp386–Arg389, and Glu425. Zn(2+) is bound at residue His429. Tyr452 is a binding site for substrate. His493 serves as a coordination point for Zn(2+). [4Fe-4S] cluster is bound by residues Cys573, Cys576, and Cys581.

The protein belongs to the ThiC family. Homodimer. It depends on [4Fe-4S] cluster as a cofactor.

The enzyme catalyses 5-amino-1-(5-phospho-beta-D-ribosyl)imidazole + S-adenosyl-L-methionine = 4-amino-2-methyl-5-(phosphooxymethyl)pyrimidine + CO + 5'-deoxyadenosine + formate + L-methionine + 3 H(+). The protein operates within cofactor biosynthesis; thiamine diphosphate biosynthesis. In terms of biological role, catalyzes the synthesis of the hydroxymethylpyrimidine phosphate (HMP-P) moiety of thiamine from aminoimidazole ribotide (AIR) in a radical S-adenosyl-L-methionine (SAM)-dependent reaction. The protein is Phosphomethylpyrimidine synthase of Pseudomonas aeruginosa (strain LESB58).